The sequence spans 479 residues: Octopamine receptor (479 aa).

Topologically, residues 1 to 57 (MGQAATHDANNYTSINYTEIYDVIEDEKDVCAVADEPNIPCSFGISLAVPEWEAICT) are extracellular. Asparagine 11 and asparagine 16 each carry an N-linked (GlcNAc...) asparagine glycan. The chain crosses the membrane as a helical span at residues 58–80 (AIILTMIIISTVVGNILVILSVF). The Cytoplasmic segment spans residues 81–90 (TYKPLRIVQN). Residues 91-112 (FFIVSLAVADLTVAILVLPLNV) form a helical membrane-spanning segment. The Extracellular portion of the chain corresponds to 113–129 (AYSILGQWVFGIYVCKM). A helical transmembrane segment spans residues 130–150 (WLTCDIMCCTSSILNLCAIAL). Residues 151 to 170 (DRYWAITDPINYAQKRTLER) lie on the Cytoplasmic side of the membrane. Residues 171 to 193 (VLFMIGIVWILSLVISSPPLLGW) traverse the membrane as a helical segment. Over 194-218 (NDWPEVFEPDTPCRLTSQPGFVIFS) the chain is Extracellular. The chain crosses the membrane as a helical span at residues 219 to 240 (SSGSFYIPLVIMTVVYFEIYLA). Over 241–407 (TKKRLRDRAK…LTRERRAART (167 aa)) the chain is Cytoplasmic. A disordered region spans residues 260–319 (GRNKYETKESDPNDQDSVSSDANPNEHQGGTRLVAENEKKHRTRKLTPKKKPKRRYWSKD). The segment covering 274–287 (QDSVSSDANPNEHQ) has biased composition (polar residues). Basic residues predominate over residues 299 to 315 (KHRTRKLTPKKKPKRRY). A helical transmembrane segment spans residues 408 to 429 (LGIIMGVFVVCWLPFFVIYLVI). Residues 430 to 441 (PFCVSCCLSNKF) are Extracellular-facing. The chain crosses the membrane as a helical span at residues 442–462 (INFITWLGYVNSALNPLIYTI). At 463–479 (FNMDFRRAFKKLLFIKC) the chain is on the cytoplasmic side.

Belongs to the G-protein coupled receptor 1 family.

The protein localises to the cell membrane. Receptor for octopamine. Octopamine (OA) is a neurotransmitter, neurohormone, and neuromodulator in invertebrates. The activity of this receptor is mediated by G proteins which activate adenylyl cyclase. The chain is Octopamine receptor from Bombyx mori (Silk moth).